The primary structure comprises 408 residues: Arginine biosynthesis bifunctional protein ArgJ (408 aa).

Residues Thr158, Lys184, Thr195, Glu281, Asn403, and Thr408 each coordinate substrate. Thr195 serves as the catalytic Nucleophile.

It belongs to the ArgJ family. In terms of assembly, heterotetramer of two alpha and two beta chains.

The protein resides in the cytoplasm. The enzyme catalyses N(2)-acetyl-L-ornithine + L-glutamate = N-acetyl-L-glutamate + L-ornithine. The catalysed reaction is L-glutamate + acetyl-CoA = N-acetyl-L-glutamate + CoA + H(+). It functions in the pathway amino-acid biosynthesis; L-arginine biosynthesis; L-ornithine and N-acetyl-L-glutamate from L-glutamate and N(2)-acetyl-L-ornithine (cyclic): step 1/1. Its pathway is amino-acid biosynthesis; L-arginine biosynthesis; N(2)-acetyl-L-ornithine from L-glutamate: step 1/4. Catalyzes two activities which are involved in the cyclic version of arginine biosynthesis: the synthesis of N-acetylglutamate from glutamate and acetyl-CoA as the acetyl donor, and of ornithine by transacetylation between N(2)-acetylornithine and glutamate. This Bacillus cereus (strain ZK / E33L) protein is Arginine biosynthesis bifunctional protein ArgJ.